Reading from the N-terminus, the 378-residue chain is Ferrochelatase (378 aa).

2 residues coordinate Fe cation: His214 and Glu295.

Belongs to the ferrochelatase family.

Its subcellular location is the cytoplasm. It catalyses the reaction heme b + 2 H(+) = protoporphyrin IX + Fe(2+). It functions in the pathway porphyrin-containing compound metabolism; protoheme biosynthesis; protoheme from protoporphyrin-IX: step 1/1. In terms of biological role, catalyzes the ferrous insertion into protoporphyrin IX. The chain is Ferrochelatase from Hydrogenovibrio crunogenus (strain DSM 25203 / XCL-2) (Thiomicrospira crunogena).